Here is a 205-residue protein sequence, read N- to C-terminus: Proteasome subunit beta type-3 (205 aa).

It belongs to the peptidase T1B family. In terms of assembly, the 26S proteasome consists of a 20S proteasome core and two 19S regulatory subunits. The 20S proteasome core is composed of 28 subunits that are arranged in four stacked rings, resulting in a barrel-shaped structure. The two end rings are each formed by seven alpha subunits, and the two central rings are each formed by seven beta subunits. The catalytic chamber with the active sites is on the inside of the barrel.

Its subcellular location is the cytoplasm. The protein resides in the nucleus. Its function is as follows. Non-catalytic component of the proteasome, a multicatalytic proteinase complex which is characterized by its ability to cleave peptides with Arg, Phe, Tyr, Leu, and Glu adjacent to the leaving group at neutral or slightly basic pH. The proteasome has an ATP-dependent proteolytic activity. In Oncorhynchus mykiss (Rainbow trout), this protein is Proteasome subunit beta type-3 (psmb3).